A 128-amino-acid polypeptide reads, in one-letter code: Glycine cleavage system H protein (128 aa).

Residues 24 to 106 (VFCVGITDHA…YDEGWLFRIR (83 aa)) enclose the Lipoyl-binding domain. Lysine 65 carries the post-translational modification N6-lipoyllysine.

It belongs to the GcvH family. As to quaternary structure, the glycine cleavage system is composed of four proteins: P, T, L and H. It depends on (R)-lipoate as a cofactor.

The glycine cleavage system catalyzes the degradation of glycine. The H protein shuttles the methylamine group of glycine from the P protein to the T protein. The chain is Glycine cleavage system H protein from Edwardsiella ictaluri (strain 93-146).